A 274-amino-acid chain; its full sequence is Outer surface protein A (274 aa).

Residues 1 to 16 form the signal peptide; the sequence is MKKYLLGIGLILALIA. The N-palmitoyl cysteine moiety is linked to residue Cys-17. Cys-17 carries the S-diacylglycerol cysteine lipid modification.

This sequence belongs to the OspA lipoprotein family.

Its subcellular location is the cell outer membrane. It is found in the cell surface. The polypeptide is Outer surface protein A (Borreliella burgdorferi (Lyme disease spirochete)).